We begin with the raw amino-acid sequence, 187 residues long: ATP-dependent protease subunit HslV (187 aa).

Thr13 is a catalytic residue. Na(+)-binding residues include Ala172, Cys175, and Thr178.

This sequence belongs to the peptidase T1B family. HslV subfamily. A double ring-shaped homohexamer of HslV is capped on each side by a ring-shaped HslU homohexamer. The assembly of the HslU/HslV complex is dependent on binding of ATP.

The protein localises to the cytoplasm. It catalyses the reaction ATP-dependent cleavage of peptide bonds with broad specificity.. Its activity is regulated as follows. Allosterically activated by HslU binding. In terms of biological role, protease subunit of a proteasome-like degradation complex believed to be a general protein degrading machinery. This is ATP-dependent protease subunit HslV from Caulobacter sp. (strain K31).